Consider the following 81-residue polypeptide: uncharacterized protein (81 aa).

It to Synechocystis PCC 6803 ssr2439.

Functionally, may have a regulatory function. This is an uncharacterized protein from Synechococcus elongatus (strain ATCC 33912 / PCC 7942 / FACHB-805) (Anacystis nidulans R2).